A 383-amino-acid chain; its full sequence is S-adenosylmethionine synthase (383 aa).

Residue histidine 15 coordinates ATP. Aspartate 17 provides a ligand contact to Mg(2+). Glutamate 43 provides a ligand contact to K(+). 2 residues coordinate L-methionine: glutamate 56 and glutamine 99. Positions 99 to 109 are flexible loop; it reads QSPDINQGVDK. ATP is bound by residues 164 to 166, 230 to 231, aspartate 239, 245 to 246, alanine 262, and lysine 266; these read DAK, RF, and RK. Aspartate 239 serves as a coordination point for L-methionine. Lysine 270 is a binding site for L-methionine.

This sequence belongs to the AdoMet synthase family. As to quaternary structure, homotetramer; dimer of dimers. The cofactor is Mg(2+). K(+) is required as a cofactor.

It is found in the cytoplasm. The enzyme catalyses L-methionine + ATP + H2O = S-adenosyl-L-methionine + phosphate + diphosphate. The protein operates within amino-acid biosynthesis; S-adenosyl-L-methionine biosynthesis; S-adenosyl-L-methionine from L-methionine: step 1/1. In terms of biological role, catalyzes the formation of S-adenosylmethionine (AdoMet) from methionine and ATP. The overall synthetic reaction is composed of two sequential steps, AdoMet formation and the subsequent tripolyphosphate hydrolysis which occurs prior to release of AdoMet from the enzyme. This is S-adenosylmethionine synthase from Vibrio atlanticus (strain LGP32) (Vibrio splendidus (strain Mel32)).